Consider the following 502-residue polypeptide: MRNTLRVIIFVLAVAAFLFLTNDYWEGKLLGGLSILISCSVVFIAFVISLENRKPAHTITWLVVLGSFPLIGFFFYLMFGRNYRKQRLFQKKAMLDEQTFLKFQGQREWAIEQMPIGEHQRPLLQLAHRIGKSPVSLATETRVLTNGEETFSTIFEELEKATHHIHLEYYIVRHDEVGQKLKTILIEKAKKGVHVRFLYDAVGSWKLSKTYIQELRDAGVEMIPFSPVRLPFLSNTINFRNHRKIIVIDGTIGFVGGLNIGDEYLGKDKYFGFWRDTHLWIRGEAVRTLQLIFLQDWYYMTGKTLLTPEYLSPELVHYDGQGGVQLIAGGPDQKWEVIKHLYFAMITSAQRSIWIASPYFVPDEDILTALKIAALSGLDVRILAPKRPDKKIVFYASRSYFPELLEAGVKIYEYSKGFLHSKIMIVDGELASIGTANMDMRSFHLNFEVNAFLYHTDSTKKLVADFLEDLKEASPIDYETFQQRPLSIRVVESVSRLLSPLL.

3 helical membrane passes run 7-27 (VIIFVLAVAAFLFLTNDYWEG), 29-49 (LLGGLSILISCSVVFIAFVIS), and 59-79 (ITWLVVLGSFPLIGFFFYLMF). PLD phosphodiesterase domains lie at 237–264 (INFRNHRKIIVIDGTIGFVGGLNIGDEY) and 415–442 (SKGFLHSKIMIVDGELASIGTANMDMRS). Catalysis depends on residues histidine 242, lysine 244, aspartate 249, histidine 420, lysine 422, and aspartate 427.

The protein belongs to the phospholipase D family. Cardiolipin synthase subfamily.

The protein localises to the cell membrane. It carries out the reaction 2 a 1,2-diacyl-sn-glycero-3-phospho-(1'-sn-glycerol) = a cardiolipin + glycerol. Catalyzes the reversible phosphatidyl group transfer from one phosphatidylglycerol molecule to another to form cardiolipin (CL) (diphosphatidylglycerol) and glycerol. The chain is Cardiolipin synthase (cls) from Geobacillus sp. (strain WCH70).